A 201-amino-acid polypeptide reads, in one-letter code: Probable nicotinate-nucleotide adenylyltransferase (201 aa).

This sequence belongs to the NadD family.

The catalysed reaction is nicotinate beta-D-ribonucleotide + ATP + H(+) = deamido-NAD(+) + diphosphate. The protein operates within cofactor biosynthesis; NAD(+) biosynthesis; deamido-NAD(+) from nicotinate D-ribonucleotide: step 1/1. Functionally, catalyzes the reversible adenylation of nicotinate mononucleotide (NaMN) to nicotinic acid adenine dinucleotide (NaAD). The sequence is that of Probable nicotinate-nucleotide adenylyltransferase from Neisseria meningitidis serogroup C / serotype 2a (strain ATCC 700532 / DSM 15464 / FAM18).